The primary structure comprises 133 residues: MKPISASIVRALPVGAYLNVADNSGAKVVKLIAVKGYKGRKRRLAKAGIADLVIVSVRDGKPDMIGQIFKAVVVRMKKEWRRRDGTRIKFEDNAVALLKDDYGTPKGTIIKTPIAKEVAERWPDLAKIARIIV.

It belongs to the universal ribosomal protein uL14 family. Part of the 50S ribosomal subunit. Forms a cluster with proteins L3 and L24e, part of which may contact the 16S rRNA in 2 intersubunit bridges.

In terms of biological role, binds to 23S rRNA. Forms part of two intersubunit bridges in the 70S ribosome. In Nanoarchaeum equitans (strain Kin4-M), this protein is Large ribosomal subunit protein uL14.